Reading from the N-terminus, the 427-residue chain is Type II methyltransferase M1.BsuMI (427 aa).

Residues 84-427 (INIADLFSGC…SYLLALHQLR (344 aa)) enclose the SAM-dependent MTase C5-type domain. C176 is a catalytic residue.

The protein belongs to the class I-like SAM-binding methyltransferase superfamily. C5-methyltransferase family. As to quaternary structure, monomer. May form a complex with YdiP, also seems to be active alone.

The enzyme catalyses a 2'-deoxycytidine in DNA + S-adenosyl-L-methionine = a 5-methyl-2'-deoxycytidine in DNA + S-adenosyl-L-homocysteine + H(+). Its activity is regulated as follows. Somewhat inhibited by MgCl(2) and spermidine, strongly inhibited by MnCl(2). A methylase, recognizes the double-stranded sequence 5'-YTCGAR-3', methylates C-3 on both strands, and protects the DNA from cleavage by the BsuMI endonuclease. This chain is Type II methyltransferase M1.BsuMI (ydiO), found in Bacillus subtilis (strain 168).